Consider the following 105-residue polypeptide: N(4)-acetylcytidine amidohydrolase (105 aa).

The region spanning 7-93 is the ASCH domain; that stretch reads TFFERFEHDI…VIAEIYPGLE (87 aa). Residue Lys-21 is the Proton acceptor of the active site. The active-site Nucleophile is Thr-24. Glu-74 functions as the Proton donor in the catalytic mechanism.

It belongs to the N(4)-acetylcytidine amidohydrolase family.

It catalyses the reaction N(4)-acetylcytidine + H2O = cytidine + acetate + H(+). It carries out the reaction N(4)-acetyl-2'-deoxycytidine + H2O = 2'-deoxycytidine + acetate + H(+). The catalysed reaction is N(4)-acetylcytosine + H2O = cytosine + acetate + H(+). In terms of biological role, catalyzes the hydrolysis of N(4)-acetylcytidine (ac4C). The polypeptide is N(4)-acetylcytidine amidohydrolase (Shewanella baltica (strain OS185)).